The chain runs to 49 residues: MRVNIQLACTECKRRNYATDKNKKNTTGRLELKKYCPWDKKHTVHRETK.

Belongs to the bacterial ribosomal protein bL33 family.

The protein is Large ribosomal subunit protein bL33 of Nitratidesulfovibrio vulgaris (strain ATCC 29579 / DSM 644 / CCUG 34227 / NCIMB 8303 / VKM B-1760 / Hildenborough) (Desulfovibrio vulgaris).